A 198-amino-acid polypeptide reads, in one-letter code: Photosystem I assembly protein Ycf4 (198 aa).

Positions Met-1 to Ser-20 are disordered. 2 helical membrane-spanning segments follow: residues Trp-38–Leu-58 and Leu-78–Ile-98.

The protein belongs to the Ycf4 family.

It is found in the cellular thylakoid membrane. Seems to be required for the assembly of the photosystem I complex. This Trichormus variabilis (strain ATCC 29413 / PCC 7937) (Anabaena variabilis) protein is Photosystem I assembly protein Ycf4.